A 267-amino-acid chain; its full sequence is tRNA pseudouridine synthase A (267 aa).

Aspartate 51 functions as the Nucleophile in the catalytic mechanism. Position 109 (tyrosine 109) interacts with substrate.

This sequence belongs to the tRNA pseudouridine synthase TruA family. In terms of assembly, homodimer.

The catalysed reaction is uridine(38/39/40) in tRNA = pseudouridine(38/39/40) in tRNA. Its function is as follows. Formation of pseudouridine at positions 38, 39 and 40 in the anticodon stem and loop of transfer RNAs. In Staphylococcus carnosus (strain TM300), this protein is tRNA pseudouridine synthase A.